A 116-amino-acid chain; its full sequence is Non-specific lipid-transfer protein 8 (116 aa).

Residues 1-24 (MNVLKCLAIISVLGIFFIPRYSES) form the signal peptide. Cystine bridges form between C28/C76, C38/C53, C54/C98, and C74/C112.

Belongs to the plant LTP family.

Functionally, plant non-specific lipid-transfer proteins transfer phospholipids as well as galactolipids across membranes. May play a role in wax or cutin deposition in the cell walls of expanding epidermal cells and certain secretory tissues. This chain is Non-specific lipid-transfer protein 8 (LTP8), found in Arabidopsis thaliana (Mouse-ear cress).